A 272-amino-acid polypeptide reads, in one-letter code: Rhomboid-type serine protease B (272 aa).

5 helical membrane passes run 30-50 (IVLL…WSVV), 72-92 (PFIH…TPLL), 103-123 (TAVA…YILV), 133-153 (AVVG…IKTF), and 164-184 (TKIP…IFVP). Catalysis depends on S138, which acts as the Nucleophile. Residue N185 is glycosylated (N-linked (GlcNAc...) asparagine). A helical transmembrane segment spans residues 186–206 (TSFLGHLSAIIIGYLLGLGYL). The active site involves H191.

This sequence belongs to the peptidase S54 family.

Its subcellular location is the membrane. It carries out the reaction Cleaves type-1 transmembrane domains using a catalytic dyad composed of serine and histidine that are contributed by different transmembrane domains.. In terms of biological role, rhomboid protease that catalyzes intramembrane proteolysis. Required for transcription factor srbA activation by mediating its release from the membrane and thereby regulating its activity under hypoxic conditions. Essential for iron homeostasis and resistance to azoles such as voriconazole. Required for virulence in murine models of invasive pulmonary aspergillosis (IPA). The sequence is that of Rhomboid-type serine protease B from Aspergillus fumigatus (strain CBS 144.89 / FGSC A1163 / CEA10) (Neosartorya fumigata).